A 1148-amino-acid chain; its full sequence is MGKSSPVCLYLILQGLLLFDTVNAKNLNELKMECPHTIGLGQGLVVGSVELPPVPIQQIESLKLESSCNFDLHTSTAGQQSFTKWTWETKGDLAENTQASSTSFQTKSSEVNLRGLCLIPTLVVETAARMRKTIACYDLSCNQTVCQPTVYLMGPIQTCLTTKSCLLGLGDQRIQVNYERTYCVSGQLVEGVCFNPIHTMALSQPSHTYDIVTIMVRCFLVIKKVTSGDSMKIEKNFETLVQKTGCTANGFQGYYICLIGSSSEPLYVPTLDDYRSAEVLSRMAFAPHGEDHDIEKNAVSALRIAGKVTGKAPSTESSDTVQGIAFSGSPLYTSTGVLTAKDDPVYVWAPGIIMEGNHSVCEKKTLPLTWTGFIPLPGEIEKTTQCTVFCTLAGPGADCEAYSETGIFNISSPTCLINRVQRFRGAEQQIKFVCQRVDMDITVYCNGVKKVILTKTLVIGQCIYTFTSIFSMIPGIAHSLAVELCVPGLHGWATVLLLLTFCFGWVLIPTITMILLKILIAFAYLCSKYNTDSKFRILVEKVKKEYQKTMGSMVCEVCQYECETAKELESHRKSCSIGSCPYCLNPSEATPSALQAHFKVCKLTSRFQENLKKSLTMYEPMQGCYRTLSLFRYRSRFFVGLVWCMLLVLELIVWAASAETQNLNDGWTDTAHGSGIIPMKADLELDFSLPSSASYTYRRQLQNPANEQEKIPFHLQISKQVIHAEIQHLGHWMDATFNLKTAFHCYGSCEKYAYPWQTAGCFVEKDYEYETGWGCNPPDCPGVGTGCTACGVYLDKLKSVGKVFKIVSLRYTRKVCIQLGTGQTCKTVDSNDCLITTSVKVCLIGTISKFQPSDTLLFLGPLQQGGLIFKQWCTTTCQFGDPGDIMSTPTGMKCPELNGSFRKKCAFATTPVCQFDGNTISGYKRMVATKDSFQSFNVTEPHISTSALEWIDLDSSLRDHINVIVSRDLSFQDLSETPCQVDLTTSATDGAWGSGVGFNLVCTVSLTECSAFLTSIKACHAAMCYGSTTTNLVRGQNTIHVVGKGGHSGSKFMCCHDTKCSSTGLVAAAPHLDRVTGFNQADSDKIFDDGAPECGMSCWFKKLGEWVLGVLNGNWMVVAVLIALLILSIFLFALCCPRRPSYKKDHKP.

A signal peptide spans methionine 1–asparagine 23. Residues alanine 24–leucine 496 lie on the Lumenal side of the membrane. Intrachain disulfides connect cysteine 34/cysteine 159, cysteine 68/cysteine 165, cysteine 117/cysteine 136, cysteine 141/cysteine 146, cysteine 183/cysteine 193, and cysteine 218/cysteine 257. Asparagine 142 is a glycosylation site (N-linked (GlcNAc...) asparagine; by host). An N-linked (GlcNAc...) asparagine; by host glycan is attached at asparagine 357. Cystine bridges form between cysteine 386–cysteine 445, cysteine 390–cysteine 399, cysteine 415–cysteine 434, and cysteine 462–cysteine 485. Asparagine 409 carries an N-linked (GlcNAc...) asparagine; by host glycan. A helical transmembrane segment spans residues leucine 497–lysine 517. Residues isoleucine 518 to phenylalanine 637 lie on the Cytoplasmic side of the membrane. The tract at residues cysteine 526–lysine 543 is binding to the ribonucleoprotein. 2 CCHC-type zinc fingers span residues cysteine 555 to cysteine 575 and cysteine 580 to cysteine 601. 2 binding to the ribonucleoprotein regions span residues phenylalanine 598–leucine 615 and methionine 621–serine 635. The ITAM domain occupies methionine 621–cysteine 644. The short motif at tyrosine 625–leucine 628 is the YxxL element. Residues phenylalanine 638–alanine 658 traverse the membrane as a helical segment. Residues glutamate 659–tryptophan 1115 are Lumenal-facing. Disulfide bonds link cysteine 745-cysteine 780, cysteine 749-cysteine 787, cysteine 761-cysteine 894, cysteine 775-cysteine 905, cysteine 790-cysteine 913, cysteine 816-cysteine 825, cysteine 833-cysteine 842, and cysteine 873-cysteine 877. Residues tyrosine 767–cysteine 787 are fusion loop. The N-linked (GlcNAc...) asparagine; by host glycan is linked to asparagine 937. 5 cysteine pairs are disulfide-bonded: cysteine 979-cysteine 1009, cysteine 1002-cysteine 1054, cysteine 1019-cysteine 1024, cysteine 1055-cysteine 1060, and cysteine 1094-cysteine 1098. The helical transmembrane segment at methionine 1116–cysteine 1136 threads the bilayer. Positions leucine 1131–proline 1148 are binding to the ribonucleoprotein. Residues proline 1137–proline 1148 are Cytoplasmic-facing.

The protein belongs to the hantavirus envelope glycoprotein family. Homodimer. Homotetramer; forms heterotetrameric Gn-Gc spikes in the pre-fusion conformation. Interacts (via C-terminus) with the nucleoprotein. Interacts with host TUFM; this interaction contributes to the virus-induced degradation of mitochondria by autophagy, which leads to degradation of host MAVS and inhibition of type I interferon (IFN) responses. Interacts with host MAP1LC3B; this interaction contributes to the virus-induced degradation of mitochondria by autophagy, which leads to degradation of host MAVS and inhibition of type I interferon (IFN) responses. As to quaternary structure, homodimer. Homotetramer; forms heterotetrameric Gn-Gc spikes in the pre-fusion conformation. Homotrimer; forms homotrimer in the post-fusion conformation at acidic pH. Interacts (via C-terminus) with the nucleoprotein. Post-translationally, envelope polyprotein precursor is quickly cleaved in vivo just after synthesis, presumably by host signal peptidase.

It is found in the virion membrane. It localises to the host cell surface. The protein localises to the host Golgi apparatus membrane. The protein resides in the host endoplasmic reticulum membrane. Its subcellular location is the host mitochondrion. Its function is as follows. Forms homotetramers with glycoprotein C at the surface of the virion. Attaches the virion to host cell receptors including integrin ITGAV/ITGB3. This attachment induces virion internalization predominantly through clathrin-dependent endocytosis. Mediates the assembly and budding of infectious virus particles through its interaction with the nucleocapsid protein and the viral genome. May dysregulate normal immune and endothelial cell responses through an ITAM motif. Translocates to mitochondria, binds to host TUFM and recruits MAP1LC3B. These interactions induce mitochondrial autophagy and therefore destruction of host MAVS leading to inhibition of type I interferon (IFN) responses. Concomitant breakdown of glycoprotein N is apparently prevented by the nucleoprotein that may inhibit Gn-stimulated autophagosome-lysosome fusion. Interacts with the viral genomic RNA. Functionally, forms heterooctamers with glycoprotein N at the surface of the virion. Attaches the virion to host cell receptors including integrin ITGAV/ITGB3. This attachment induces virion internalization predominantly through clathrin-dependent endocytosis. Class II fusion protein that promotes fusion of viral membrane with host endosomal membrane after endocytosis of the virion. The chain is Envelopment polyprotein (GP) from Homo sapiens (Human).